Reading from the N-terminus, the 73-residue chain is Putative ORF9c protein (73 aa).

The helical transmembrane segment at 47 to 67 (AAVGELLLLEWLAMAVMLLLL) threads the bilayer.

It localises to the membrane. Functionally, may induce apoptosis in cardiomyocytes when overexpressed ex-vivo. The chain is Putative ORF9c protein from Homo sapiens (Human).